We begin with the raw amino-acid sequence, 386 residues long: Cytochrome b (386 aa).

A run of 4 helical transmembrane segments spans residues 32–52, 76–98, 113–133, and 179–199; these read FGSLLALCLGIQIVTGVTLAM, WLIRYLHANTASAFFFLVYLHMG, TWNIGVVIFIVMIVTAFLGYV, and FFSLHYLLPFILAALVLMHLI. Heme b-binding residues include His82 and His96. 2 residues coordinate heme b: His183 and His197. His202 is an a ubiquinone binding site. Helical transmembrane passes span 226-246, 290-310, 322-342, and 349-369; these read FLFKDLVTIFLFMLGLSIFVL, TLGVVAMLGAILILMALPYLD, LSKIAFYIFIANFLVLMILGA, and FIIFGQISTTLYFSYFIIITP.

Belongs to the cytochrome b family. As to quaternary structure, fungal cytochrome b-c1 complex contains 10 subunits; 3 respiratory subunits, 2 core proteins and 5 low-molecular weight proteins. Cytochrome b-c1 complex is a homodimer. It depends on heme b as a cofactor.

It is found in the mitochondrion inner membrane. Functionally, component of the ubiquinol-cytochrome c reductase complex (complex III or cytochrome b-c1 complex) that is part of the mitochondrial respiratory chain. The b-c1 complex mediates electron transfer from ubiquinol to cytochrome c. Contributes to the generation of a proton gradient across the mitochondrial membrane that is then used for ATP synthesis. The protein is Cytochrome b (COB) of Trichophyton rubrum (Athlete's foot fungus).